The sequence spans 192 residues: Xanthine phosphoribosyltransferase (192 aa).

2 residues coordinate xanthine: leucine 20 and asparagine 27. Alanine 128–alanine 132 provides a ligand contact to 5-phospho-alpha-D-ribose 1-diphosphate. Lysine 156 lines the xanthine pocket.

The protein belongs to the purine/pyrimidine phosphoribosyltransferase family. Xpt subfamily. In terms of assembly, homodimer.

It localises to the cytoplasm. The enzyme catalyses XMP + diphosphate = xanthine + 5-phospho-alpha-D-ribose 1-diphosphate. It participates in purine metabolism; XMP biosynthesis via salvage pathway; XMP from xanthine: step 1/1. Functionally, converts the preformed base xanthine, a product of nucleic acid breakdown, to xanthosine 5'-monophosphate (XMP), so it can be reused for RNA or DNA synthesis. The chain is Xanthine phosphoribosyltransferase from Lactobacillus acidophilus (strain ATCC 700396 / NCK56 / N2 / NCFM).